The primary structure comprises 314 residues: Ornithine carbamoyltransferase (314 aa).

Residues 61 to 64 (STRT), Q88, R112, and 139 to 142 (HPCQ) each bind carbamoyl phosphate. L-ornithine contacts are provided by residues N170, D234, and 238–239 (SM). Residues 274 to 275 (CL) and R302 each bind carbamoyl phosphate.

The protein belongs to the aspartate/ornithine carbamoyltransferase superfamily. OTCase family.

The protein localises to the cytoplasm. It catalyses the reaction carbamoyl phosphate + L-ornithine = L-citrulline + phosphate + H(+). It functions in the pathway amino-acid biosynthesis; L-arginine biosynthesis; L-arginine from L-ornithine and carbamoyl phosphate: step 1/3. In terms of biological role, reversibly catalyzes the transfer of the carbamoyl group from carbamoyl phosphate (CP) to the N(epsilon) atom of ornithine (ORN) to produce L-citrulline. The chain is Ornithine carbamoyltransferase from Anoxybacillus flavithermus (strain DSM 21510 / WK1).